We begin with the raw amino-acid sequence, 429 residues long: Citrate synthase (429 aa).

Catalysis depends on residues histidine 306 and aspartate 364.

This sequence belongs to the citrate synthase family.

It carries out the reaction oxaloacetate + acetyl-CoA + H2O = citrate + CoA + H(+). It participates in carbohydrate metabolism; tricarboxylic acid cycle; isocitrate from oxaloacetate: step 1/2. In Rhizobium meliloti (strain 1021) (Ensifer meliloti), this protein is Citrate synthase (gltA).